The following is a 214-amino-acid chain: tRNA (guanine-N(7)-)-methyltransferase (214 aa).

S-adenosyl-L-methionine contacts are provided by E43, E68, D95, and D117. Residue D117 is part of the active site. Residues K121, D153, and 190-193 (TEYE) each bind substrate.

It belongs to the class I-like SAM-binding methyltransferase superfamily. TrmB family.

It catalyses the reaction guanosine(46) in tRNA + S-adenosyl-L-methionine = N(7)-methylguanosine(46) in tRNA + S-adenosyl-L-homocysteine. It functions in the pathway tRNA modification; N(7)-methylguanine-tRNA biosynthesis. In terms of biological role, catalyzes the formation of N(7)-methylguanine at position 46 (m7G46) in tRNA. This is tRNA (guanine-N(7)-)-methyltransferase from Staphylococcus aureus (strain USA300).